A 68-amino-acid chain; its full sequence is Peptide Smp13 (68 aa).

The signal sequence occupies residues 1 to 23; the sequence is MKTQFAIFLITLVLFQMFSQSDA. Residue phenylalanine 36 is modified to Phenylalanine amide. A propeptide spanning residues 37 to 68 is cleaved from the precursor; that stretch reads GKRGLGDHDDLDELFDGEISQADIDFLKEIMQ.

This sequence belongs to the non-disulfide-bridged peptide (NDBP) superfamily. Short antimicrobial peptide (group 4) family. Expressed by the venom gland.

Its subcellular location is the secreted. In terms of biological role, peptide with unknown function. Does not show antimicrobial activity against the Gram-positive, and Gram-negative bacteria tested, as well as against the fungus C.albicans. The polypeptide is Peptide Smp13 (Scorpio palmatus (Israeli golden scorpion)).